The sequence spans 217 residues: Superoxide dismutase [Cu-Zn], chloroplastic (217 aa).

The transit peptide at 1–63 (MAAHSIFTTT…TTPKPLTVFA (63 aa)) directs the protein to the chloroplast. 3 residues coordinate Cu cation: His109, His111, and His126. An intrachain disulfide couples Cys120 to Cys209. Zn(2+) contacts are provided by His126, His134, His143, and Asp146. His183 is a binding site for Cu cation.

It belongs to the Cu-Zn superoxide dismutase family. Homotetramer. It depends on Cu cation as a cofactor. Zn(2+) serves as cofactor.

The protein resides in the plastid. The protein localises to the chloroplast. The enzyme catalyses 2 superoxide + 2 H(+) = H2O2 + O2. Its function is as follows. Destroys radicals which are normally produced within the cells and which are toxic to biological systems. This chain is Superoxide dismutase [Cu-Zn], chloroplastic (SODCP.2), found in Solanum lycopersicum (Tomato).